A 344-amino-acid polypeptide reads, in one-letter code: Probable magnesium transporter NIPA9 (344 aa).

The Cytoplasmic segment spans residues 1 to 46 (MWESICLTLAATAGNNIGKVLQKKGTIILPPLSLKLKVLRAYAENK). 2 helical membrane passes run 47 to 67 (PWAL…RALS) and 68 to 88 (LAPV…LSVF). The Cytoplasmic portion of the chain corresponds to 89–98 (SHFYLKEVMN). The helical transmembrane segment at 99–119 (VFDWIGITVAGIGTIGVGAGG) threads the bilayer. Topologically, residues 120–125 (EEQEAS) are extracellular. Residues 126–146 (LISVFQLLWLALVVAILFVLL) form a helical membrane-spanning segment. Over 147 to 166 (NAWLHIFKRQRREQELGEYE) the chain is Cytoplasmic. Residues 167–187 (VVEEIIYGLESGILFGMASVV) form a helical membrane-spanning segment. Residues 188-191 (SKMG) are Extracellular-facing. Residues 192-212 (FVFVEQGFSTMFIPMCISISI) traverse the membrane as a helical segment. Residues 213–231 (CCSGTGFFYQTRGLKHGRA) lie on the Cytoplasmic side of the membrane. The chain crosses the membrane as a helical span at residues 232–252 (IVVSTCAAVASIVTGVVAGMF). Over 253–265 (ALGEKLPTSPSGR) the chain is Extracellular. The chain crosses the membrane as a helical span at residues 266 to 286 (LLLLLGWLLIMLGVVLLVTSS). Over 287–344 (RLIRHLPRSFRRSRQTSLERGFNIRRTTSHTPKDTNPSAVIQAATLHHLLSSPSKDKD) the chain is Cytoplasmic.

The protein belongs to the NIPA (TC 2.A.7) family. In terms of assembly, homodimer.

It localises to the cell membrane. The protein localises to the early endosome. In terms of biological role, acts as a Mg(2+) transporter. Can also transport other divalent cations such as Fe(2+), Sr(2+), Ba(2+), Mn(2+) and Co(2+) but to a much less extent than Mg(2+). This chain is Probable magnesium transporter NIPA9, found in Arabidopsis thaliana (Mouse-ear cress).